A 516-amino-acid polypeptide reads, in one-letter code: MAAPEQPLPMSRGCQNSSSLSPPRGDRTLLVRHLPAELTAEEKEDLLKYFGAQSVRDLSDKGRLKHTAFATFPNEKTAVKALTRLHQLKLLGHTLVVEFAKEQDRVHSPCPSLGTEKKKRSDDPVEDDKEKKELDCLTIENGIAPNHGLTFPLNSCLKYMYPPPSSTILANIVNALASVPKFYVQVLHLMNKMNLPTPFGPITTRPPMYEDYMPLHAPLPPTSPQPPEEPPLPDEDEELSSKESEYESSDDEDRQRMTKLMELANLQPKRPKPIKQRHVRKKRKIKDMLNIPSSASHSLHPVLLPSDVFDQPQPVGNKKIEFHISTDMQVAFKKDLEKQQNCEEENSDLPATEADASNIGFGKIFPQPNLNITEEIKDDSDEMPSECISRRELEKGRISREEMETLSVFRSYEPGEPNCRIYVKNLAKHVQEKDLKFIFGRYVDFSSETQRIMFDIRLMKEGRMKGQAFIGLPNEKAAAKALKEANGYVLFGKPMVVQFARSARPKQDSKEGKRKC.

4 disordered regions span residues 1–27 (MAAP…RGDR), 106–130 (VHSP…DDKE), 210–254 (EDYM…DEDR), and 264–283 (ANLQ…RKKR). Ser-21 bears the Phosphoserine mark. Residues 27–102 (RTLLVRHLPA…HTLVVEFAKE (76 aa)) enclose the RRM 1 domain. Phosphoserine is present on Ser-108. Positions 115–130 (TEKKKRSDDPVEDDKE) are enriched in basic and acidic residues. Residues 217–230 (APLPPTSPQPPEEP) are compositionally biased toward pro residues. A compositionally biased stretch (basic residues) spans 269-283 (KRPKPIKQRHVRKKR). The RRM 2 domain maps to 419–502 (CRIYVKNLAK…KPMVVQFARS (84 aa)).

As to quaternary structure, component of the U11/U12 snRNPs that are part of the U12-type spliceosome. Found in a complex with m(7)G-capped U12 snRNA. Interacts with PDCD7.

The protein resides in the nucleus. In terms of biological role, participates in pre-mRNA U12-dependent splicing, performed by the minor spliceosome which removes U12-type introns. U12-type introns comprises less than 1% of all non-coding sequences. Binds to the 3'-stem-loop of m(7)G-capped U12 snRNA. The polypeptide is RNA-binding region-containing protein 3 (RNPC3) (Bos taurus (Bovine)).